We begin with the raw amino-acid sequence, 310 residues long: Apolipoprotein E (310 aa).

The signal sequence occupies residues methionine 1–alanine 18. Tandem repeats lie at residues alanine 77–glycine 98, proline 99–glycine 120, alanine 121–glycine 142, and glutamine 143–leucine 164. An 8 X 22 AA approximate tandem repeats region spans residues alanine 77 to glutamine 248. A Methionine sulfoxide modification is found at methionine 140. A Phosphoserine modification is found at serine 144. The LDL and other lipoprotein receptors binding stretch occupies residues histidine 155–arginine 165. Leucine 159 to arginine 162 contacts heparin. A repeat spans arginine 165–glutamate 186. 3 repeat units span residues arginine 187–alanine 204, threonine 205–arginine 226, and glycine 227–glutamine 248. Residues alanine 203–methionine 283 are lipid-binding and lipoprotein association. Glycine 222 to leucine 229 lines the heparin pocket. The homooligomerization stretch occupies residues asparagine 259 to glutamine 310. The interval arginine 271–methionine 283 is specificity for association with VLDL.

It belongs to the apolipoprotein A1/A4/E family. Homotetramer. May interact with ABCA1; functionally associated with ABCA1 in the biogenesis of HDLs. May interact with APP/A4 amyloid-beta peptide; the interaction is extremely stable in vitro but its physiological significance is unclear. May interact with MAPT. May interact with MAP2. In the cerebrospinal fluid, interacts with secreted SORL1. Interacts with PMEL; this allows the loading of PMEL luminal fragment on ILVs to induce fibril nucleation. In terms of processing, APOE exists as multiple glycosylated and sialylated glycoforms within cells and in plasma. The extent of glycosylation and sialylation are tissue and context specific. Post-translationally, glycated in plasma VLDL. Phosphorylated by FAM20C in the extracellular medium.

Its subcellular location is the secreted. It localises to the extracellular space. It is found in the extracellular matrix. The protein resides in the extracellular vesicle. The protein localises to the endosome. Its subcellular location is the multivesicular body. Its function is as follows. APOE is an apolipoprotein, a protein associating with lipid particles, that mainly functions in lipoprotein-mediated lipid transport between organs via the plasma and interstitial fluids. APOE is a core component of plasma lipoproteins and is involved in their production, conversion and clearance. Apolipoproteins are amphipathic molecules that interact both with lipids of the lipoprotein particle core and the aqueous environment of the plasma. As such, APOE associates with chylomicrons, chylomicron remnants, very low density lipoproteins (VLDL) and intermediate density lipoproteins (IDL) but shows a preferential binding to high-density lipoproteins (HDL). It also binds a wide range of cellular receptors including the LDL receptor/LDLR, the LDL receptor-related proteins LRP1, LRP2 and LRP8 and the very low-density lipoprotein receptor/VLDLR that mediate the cellular uptake of the APOE-containing lipoprotein particles. Finally, APOE also has a heparin-binding activity and binds heparan-sulfate proteoglycans on the surface of cells, a property that supports the capture and the receptor-mediated uptake of APOE-containing lipoproteins by cells. A main function of APOE is to mediate lipoprotein clearance through the uptake of chylomicrons, VLDLs, and HDLs by hepatocytes. APOE is also involved in the biosynthesis by the liver of VLDLs as well as their uptake by peripheral tissues ensuring the delivery of triglycerides and energy storage in muscle, heart and adipose tissues. By participating in the lipoprotein-mediated distribution of lipids among tissues, APOE plays a critical role in plasma and tissues lipid homeostasis. APOE is also involved in two steps of reverse cholesterol transport, the HDLs-mediated transport of cholesterol from peripheral tissues to the liver, and thereby plays an important role in cholesterol homeostasis. First, it is functionally associated with ABCA1 in the biogenesis of HDLs in tissues. Second, it is enriched in circulating HDLs and mediates their uptake by hepatocytes. APOE also plays an important role in lipid transport in the central nervous system, regulating neuron survival and sprouting. In Tapirus terrestris (Lowland tapir), this protein is Apolipoprotein E (APOE).